Consider the following 365-residue polypeptide: Transcription factor aptf-1 (365 aa).

Disordered regions lie at residues 13 to 40 and 93 to 126; these read EFVR…PFYE and TPPQ…SNYS. Residues 223–356 form an H-S-H (helix-span-helix), dimerization region; sequence RRKQANVTAW…MIDESIKYID (134 aa).

It belongs to the AP-2 family. In terms of assembly, binds DNA as a dimer. As to expression, expressed in five interneurons AIB, RIB and RIS.

The protein resides in the nucleus. In terms of biological role, transcription factor, which is required in the single sleep-active ring interneuron RIS for sleep-like behavioral quiescence induced by neuropeptide signaling in larvae. Regulates gene expression of sleep-inducing FMRFamide-like neuropeptide flp-11 in RIS. This chain is Transcription factor aptf-1, found in Caenorhabditis elegans.